The chain runs to 436 residues: 3-ketoacyl-CoA thiolase (436 aa).

The active-site Acyl-thioester intermediate is Cys99. Active-site proton acceptor residues include His392 and Cys422.

The protein belongs to the thiolase-like superfamily. Thiolase family. In terms of assembly, heterotetramer of two alpha chains (FadJ) and two beta chains (FadI).

It localises to the cytoplasm. It carries out the reaction an acyl-CoA + acetyl-CoA = a 3-oxoacyl-CoA + CoA. It participates in lipid metabolism; fatty acid beta-oxidation. Its function is as follows. Catalyzes the final step of fatty acid oxidation in which acetyl-CoA is released and the CoA ester of a fatty acid two carbons shorter is formed. The sequence is that of 3-ketoacyl-CoA thiolase from Salmonella typhi.